A 167-amino-acid polypeptide reads, in one-letter code: Phosphopantetheine adenylyltransferase (167 aa).

A substrate-binding site is contributed by serine 10. ATP is bound by residues 10–11 (SF) and histidine 18. Substrate contacts are provided by lysine 42, alanine 79, and arginine 93. ATP is bound by residues 94-96 (GLR), glutamate 104, and 129-135 (VGHITAT).

The protein belongs to the bacterial CoaD family. As to quaternary structure, homohexamer. The cofactor is Mg(2+).

The protein localises to the cytoplasm. The enzyme catalyses (R)-4'-phosphopantetheine + ATP + H(+) = 3'-dephospho-CoA + diphosphate. The protein operates within cofactor biosynthesis; coenzyme A biosynthesis; CoA from (R)-pantothenate: step 4/5. Reversibly transfers an adenylyl group from ATP to 4'-phosphopantetheine, yielding dephospho-CoA (dPCoA) and pyrophosphate. This chain is Phosphopantetheine adenylyltransferase, found in Methylocella silvestris (strain DSM 15510 / CIP 108128 / LMG 27833 / NCIMB 13906 / BL2).